Reading from the N-terminus, the 128-residue chain is SGSCSIQTCWDQLGAFDIIGEALRKRYETAVLVDYINGNLFPSEVKSKDASEPVDKSDLAFLELSPNYCQLNSTIGAVGTLGRECLRGRGVDEVSEWEARSCKRLCTSCGLGVKRTKVVVSSSCNCKF.

Residue Ser-1 is the site of O-palmitoleoyl serine attachment. Cystine bridges form between Cys-69–Cys-109 and Cys-85–Cys-102. Asn-72 is a glycosylation site (N-linked (GlcNAc...) asparagine).

Belongs to the Wnt family. Palmitoleoylation is required for efficient binding to frizzled receptors. Depalmitoleoylation leads to Wnt signaling pathway inhibition. In terms of processing, proteolytic processing by tiki1 and tiki2 promotes oxidation and formation of large disulfide-bond oligomers, leading to inactivation of wnt8.

The protein localises to the secreted. It is found in the extracellular space. The protein resides in the extracellular matrix. Functionally, ligand for members of the frizzled family of seven transmembrane receptors. Probable developmental protein. May be a signaling molecule which affects the development of discrete regions of tissues. Is likely to signal over only few cell diameters. In Evasterias troschelii (Mottled sea star), this protein is Protein Wnt-8 (WNT-8).